The chain runs to 146 residues: Large ribosomal subunit protein uL15 (146 aa).

The span at 1-13 (MKLHELKPAEGSR) shows a compositional bias: basic and acidic residues. The disordered stretch occupies residues 1 to 59 (MKLHELKPAEGSRKVRNRVGRGTSSGNGKTSGRGQKGQKARSGGGVRLGFEGGQTPLFR). 2 stretches are compositionally biased toward gly residues: residues 23–35 (TSSG…GRGQ) and 42–52 (SGGGVRLGFEG).

This sequence belongs to the universal ribosomal protein uL15 family. As to quaternary structure, part of the 50S ribosomal subunit.

In terms of biological role, binds to the 23S rRNA. This is Large ribosomal subunit protein uL15 from Streptococcus agalactiae serotype Ia (strain ATCC 27591 / A909 / CDC SS700).